Consider the following 219-residue polypeptide: Interleukin-12 subunit alpha (219 aa).

The signal sequence occupies residues Met1–Ala22. 3 disulfides stabilise this stretch: Cys37-Cys110, Cys64-Cys196, and Cys85-Cys123. N-linked (GlcNAc...) asparagine glycans are attached at residues Asn93 and Asn107.

The protein belongs to the IL-6 superfamily. In terms of assembly, heterodimer with IL12B; disulfide-linked. This heterodimer is known as interleukin IL-12. Heterodimer with EBI3/IL27B; not disulfide-linked. This heterodimer is known as interleukin IL-35. Interacts with NBR1; this interaction promotes IL-12 secretion.

The protein resides in the secreted. Its function is as follows. Heterodimerizes with IL12B to form the IL-12 cytokine or with EBI3/IL27B to form the IL-35 cytokine. IL-12 is primarily produced by professional antigen-presenting cells (APCs) such as B-cells and dendritic cells (DCs) as well as macrophages and granulocytes and regulates T-cell and natural killer-cell responses, induces the production of interferon-gamma (IFN-gamma), favors the differentiation of T-helper 1 (Th1) cells and is an important link between innate resistance and adaptive immunity. Mechanistically, exerts its biological effects through a receptor composed of IL12R1 and IL12R2 subunits. Binding to the receptor results in the rapid tyrosine phosphorylation of a number of cellular substrates including the JAK family kinases TYK2 and JAK2. In turn, recruited STAT4 gets phosphorylated and translocates to the nucleus where it regulates cytokine/growth factor responsive genes. As part of IL-35, plays essential roles in maintaining the immune homeostasis of the liver microenvironment and also functions as an immune-suppressive cytokine. Mediates biological events through unconventional receptors composed of IL12RB2 and gp130/IL6ST heterodimers or homodimers. Signaling requires the transcription factors STAT1 and STAT4, which form a unique heterodimer that binds to distinct DNA sites. This chain is Interleukin-12 subunit alpha (IL12A), found in Homo sapiens (Human).